Reading from the N-terminus, the 536-residue chain is MHLNIALWACGALLAVLLAWQQRKCWRLIWQLNGWRGVIQQPVLWLLLCINLHPNSILEKVSQYRVHFQRPLAVLVGTRVLLYIDDPAGMECVLNAPECLDKTFLQDGFFVRRGLLHARGQKWKLRRKQLNPAFSHNIVASFFDVFNSVGNQMVEQFQTQTNLHGQAVKFTAAEDLLSRAVLEVSCLTIMGTPTNFTQLDDAHIAHSYKRLLEISAVRVVKPWLQIRLLHRLLAPELYEESKKCAKLLEDFVGGIVRTKHRNWRLRDAVGGEKSGEDASNGWQRRIFIEQIFQLAANGEMTLEEIMDEAQSMVLVSFETVSNSIMLALLCLATNKGDCQRRLLAEIRALVPDVGQVGLEQLQQLRYLDAFVSESLRLLATVPMNLRHVSRDFRLAGRQHETIVPQNSIVVLDTFNMQRDERWWGANARQFDPQRFLDQEEEQLSKGHNDSGSGEKRRQRDRRHSYSFLPFSNGLRSCIGRRYGLFIMKVFLVKLITNFDFQSDFELEKLQFVENISLKFKNADDILLTIQPKKEST.

The span at 439-457 (EEEQLSKGHNDSGSGEKRR) shows a compositional bias: basic and acidic residues. The tract at residues 439–460 (EEEQLSKGHNDSGSGEKRRQRD) is disordered. C477 contacts heme.

Belongs to the cytochrome P450 family. Heme is required as a cofactor.

The protein resides in the endoplasmic reticulum membrane. It is found in the microsome membrane. Its function is as follows. May be involved in the metabolism of insect hormones and in the breakdown of synthetic insecticides. This Drosophila melanogaster (Fruit fly) protein is Probable cytochrome P450 318a1 (Cyp318a1).